Consider the following 711-residue polypeptide: Acyl-CoA dehydrogenase FadE34 (711 aa).

It belongs to the acyl-CoA dehydrogenase family. Homodimer. FAD is required as a cofactor.

The catalysed reaction is 3-oxochol-4-en-24-oyl-CoA + A = (22E)-3-oxochola-4,22-dien-24-oyl-CoA + AH2. The enzyme catalyses 3beta-hydroxy-chol-5-ene-24-oyl-CoA + A = 3beta-hydroxy-chol-5,22-dien-24-oyl-CoA + AH2. Its pathway is steroid metabolism; cholesterol degradation. Functionally, involved in the second cycle of side chain dehydrogenation in the beta-oxidation of cholesterol catabolism. It contributes partly to the virulence by increasing the efficiency of beta-oxidation. Catalyzes the dehydrogenation of the five-carbon steroid side chain of 3-oxo-chol-4-en-24-oyl-CoA (3-OCO-CoA) to yield 3-oxochol-4,22-dien-24-oyl-CoA. Can also use 3beta-hydroxy-chol-5-ene-24-oyl-CoA, and shows weak activity with cholyl-CoA and deoxycholyl-CoA. The protein is Acyl-CoA dehydrogenase FadE34 (fadE34) of Mycobacterium tuberculosis (strain ATCC 25618 / H37Rv).